Here is a 255-residue protein sequence, read N- to C-terminus: Reaction center protein L chain (255 aa).

A run of 3 helical transmembrane segments spans residues 11–33 (FFGV…GAAL), 61–89 (GGLW…SRKL), and 94–116 (HVPA…RPLL). (7R,8Z)-bacteriochlorophyll b is bound by residues His131 and His151. The chain crosses the membrane as a helical span at residues 149 to 176 (PMHMVAVTLFFTTTLALALHGSLVLAAI). His168 serves as a coordination point for Fe cation. Phe194 is an a ubiquinone binding site. Residues 203 to 228 (GTLGIHRLGLFLALGAGFASATCILL) traverse the membrane as a helical segment. Position 208 (His208) interacts with Fe cation.

This sequence belongs to the reaction center PufL/M/PsbA/D family. Reaction center is composed of four bacteriochlorophylls, two bacteriopheophytins, two ubiquinones, one iron, and two highly hydrophobic polypeptide chains (designated L and M).

The protein localises to the cell inner membrane. Its function is as follows. The reaction center is a membrane-bound complex that mediates the initial photochemical event in the electron transfer process of photosynthesis. This Acidiphilium multivorum protein is Reaction center protein L chain (pufL).